Reading from the N-terminus, the 336-residue chain is Holliday junction branch migration complex subunit RuvB (336 aa).

Positions 1-180 are large ATPase domain (RuvB-L); that stretch reads MRRTGIRLSW…FGIVEHLEYY (180 aa). ATP contacts are provided by residues Leu18, Arg19, Gly60, Lys63, Thr64, Thr65, 127 to 129, Arg170, Tyr180, and Arg217; that span reads EDF. Thr64 is a binding site for Mg(2+). Residues 181-251 form a small ATPAse domain (RuvB-S) region; that stretch reads TPEELAQGVM…RALEALAALG (71 aa). Residues 254–336 form a head domain (RuvB-H) region; the sequence is ELGLEKRDRE…PPPVGPLLEP (83 aa). DNA-binding residues include Arg309 and Arg314.

Belongs to the RuvB family. In terms of assembly, homohexamer. Forms an RuvA(8)-RuvB(12)-Holliday junction (HJ) complex. HJ DNA is sandwiched between 2 RuvA tetramers; dsDNA enters through RuvA and exits via RuvB. An RuvB hexamer assembles on each DNA strand where it exits the tetramer. Each RuvB hexamer is contacted by two RuvA subunits (via domain III) on 2 adjacent RuvB subunits; this complex drives branch migration. In the full resolvosome a probable DNA-RuvA(4)-RuvB(12)-RuvC(2) complex forms which resolves the HJ.

The protein localises to the cytoplasm. The catalysed reaction is ATP + H2O = ADP + phosphate + H(+). The RuvA-RuvB-RuvC complex processes Holliday junction (HJ) DNA during genetic recombination and DNA repair, while the RuvA-RuvB complex plays an important role in the rescue of blocked DNA replication forks via replication fork reversal (RFR). RuvA specifically binds to HJ cruciform DNA, conferring on it an open structure. The RuvB hexamer acts as an ATP-dependent pump, pulling dsDNA into and through the RuvAB complex. RuvB forms 2 homohexamers on either side of HJ DNA bound by 1 or 2 RuvA tetramers; 4 subunits per hexamer contact DNA at a time. Coordinated motions by a converter formed by DNA-disengaged RuvB subunits stimulates ATP hydrolysis and nucleotide exchange. Immobilization of the converter enables RuvB to convert the ATP-contained energy into a lever motion, pulling 2 nucleotides of DNA out of the RuvA tetramer per ATP hydrolyzed, thus driving DNA branch migration. The RuvB motors rotate together with the DNA substrate, which together with the progressing nucleotide cycle form the mechanistic basis for DNA recombination by continuous HJ branch migration. Branch migration allows RuvC to scan DNA until it finds its consensus sequence, where it cleaves and resolves cruciform DNA. The polypeptide is Holliday junction branch migration complex subunit RuvB (Thermus thermophilus (strain ATCC BAA-163 / DSM 7039 / HB27)).